We begin with the raw amino-acid sequence, 251 residues long: Hydroxyacylglutathione hydrolase (251 aa).

7 residues coordinate Zn(2+): H58, H60, D62, H63, H116, D135, and H173.

This sequence belongs to the metallo-beta-lactamase superfamily. Glyoxalase II family. As to quaternary structure, monomer. Requires Zn(2+) as cofactor.

It catalyses the reaction an S-(2-hydroxyacyl)glutathione + H2O = a 2-hydroxy carboxylate + glutathione + H(+). Its pathway is secondary metabolite metabolism; methylglyoxal degradation; (R)-lactate from methylglyoxal: step 2/2. In terms of biological role, thiolesterase that catalyzes the hydrolysis of S-D-lactoyl-glutathione to form glutathione and D-lactic acid. This is Hydroxyacylglutathione hydrolase from Bdellovibrio bacteriovorus (strain ATCC 15356 / DSM 50701 / NCIMB 9529 / HD100).